Consider the following 313-residue polypeptide: Ribosomal RNA small subunit methyltransferase H (313 aa).

Residues 33 to 35 (GGH), D53, F80, D101, and Q108 contribute to the S-adenosyl-L-methionine site. Positions 282-313 (LVHNKPLTPSEAEIEQNPRARSAKLRVAQKLA) are disordered.

Belongs to the methyltransferase superfamily. RsmH family.

It localises to the cytoplasm. It catalyses the reaction cytidine(1402) in 16S rRNA + S-adenosyl-L-methionine = N(4)-methylcytidine(1402) in 16S rRNA + S-adenosyl-L-homocysteine + H(+). Specifically methylates the N4 position of cytidine in position 1402 (C1402) of 16S rRNA. In Magnetococcus marinus (strain ATCC BAA-1437 / JCM 17883 / MC-1), this protein is Ribosomal RNA small subunit methyltransferase H.